The sequence spans 34 residues: Ribonuclease PL1 (34 aa).

The N-linked (GlcNAc...) asparagine; partial glycan is linked to N4. Catalysis depends on H15, which acts as the Proton acceptor.

The protein belongs to the pancreatic ribonuclease family.

It localises to the lysosome. It catalyses the reaction an [RNA] containing cytidine + H2O = an [RNA]-3'-cytidine-3'-phosphate + a 5'-hydroxy-ribonucleotide-3'-[RNA].. The enzyme catalyses an [RNA] containing uridine + H2O = an [RNA]-3'-uridine-3'-phosphate + a 5'-hydroxy-ribonucleotide-3'-[RNA].. This Sus scrofa (Pig) protein is Ribonuclease PL1.